A 388-amino-acid polypeptide reads, in one-letter code: Spermidine/putrescine import ATP-binding protein PotA (388 aa).

One can recognise an ABC transporter domain in the interval isoleucine 17–isoleucine 247. An ATP-binding site is contributed by glycine 49–threonine 56.

It belongs to the ABC transporter superfamily. Spermidine/putrescine importer (TC 3.A.1.11.1) family. As to quaternary structure, the complex is composed of two ATP-binding proteins (PotA), two transmembrane proteins (PotB and PotC) and a solute-binding protein (PotD).

It localises to the cell membrane. The enzyme catalyses ATP + H2O + polyamine-[polyamine-binding protein]Side 1 = ADP + phosphate + polyamineSide 2 + [polyamine-binding protein]Side 1.. In terms of biological role, part of the ABC transporter complex PotABCD involved in spermidine/putrescine import. Responsible for energy coupling to the transport system. This chain is Spermidine/putrescine import ATP-binding protein PotA, found in Mycobacterium sp. (strain KMS).